A 627-amino-acid chain; its full sequence is Altered inheritance of mitochondria protein 9, mitochondrial (627 aa).

Residues 1–43 constitute a mitochondrion transit peptide; that stretch reads MIRYTVAGHSRRCVVGASKRVGAIKCITVAATKRFISNKSNEV.

Belongs to the AIM9 family.

It is found in the mitochondrion. This chain is Altered inheritance of mitochondria protein 9, mitochondrial (AIM9), found in Saccharomyces cerevisiae (strain JAY291) (Baker's yeast).